We begin with the raw amino-acid sequence, 167 residues long: Insertion element IS1 4 protein InsB (167 aa).

It belongs to the transposase 27 family.

Its function is as follows. Absolutely required for transposition of IS1. In Escherichia coli (strain K12), this protein is Insertion element IS1 4 protein InsB (insB4).